The primary structure comprises 364 residues: Phosphoserine aminotransferase (364 aa).

Arg41 lines the L-glutamate pocket. Residues 75-76 (AS), Trp100, Thr155, Asp175, and Gln198 contribute to the pyridoxal 5'-phosphate site. Lys199 carries the N6-(pyridoxal phosphate)lysine modification. Residue 239–240 (NT) coordinates pyridoxal 5'-phosphate.

Belongs to the class-V pyridoxal-phosphate-dependent aminotransferase family. SerC subfamily. Homodimer. The cofactor is pyridoxal 5'-phosphate.

It is found in the cytoplasm. The enzyme catalyses O-phospho-L-serine + 2-oxoglutarate = 3-phosphooxypyruvate + L-glutamate. It carries out the reaction 4-(phosphooxy)-L-threonine + 2-oxoglutarate = (R)-3-hydroxy-2-oxo-4-phosphooxybutanoate + L-glutamate. It functions in the pathway amino-acid biosynthesis; L-serine biosynthesis; L-serine from 3-phospho-D-glycerate: step 2/3. In terms of biological role, catalyzes the reversible conversion of 3-phosphohydroxypyruvate to phosphoserine and of 3-hydroxy-2-oxo-4-phosphonooxybutanoate to phosphohydroxythreonine. This chain is Phosphoserine aminotransferase, found in Streptococcus uberis (strain ATCC BAA-854 / 0140J).